Consider the following 259-residue polypeptide: MKDVDNLKSIKEEWVCETGSDNQPLGNNQQSNCEYFVDSLFEEAQKVSSKCVSPAEQKKQVDVNIKLWKNGFTVNDDFRSYSDGASQQFLNSIKKGELPSELQGIFDKEEVDVKVEDKKNEICLSTKPVFQPFSGQGHRLGSATPKIVSKAKNIEVENKNNLSAVPLNNLEPITNIQIWLANGKRIVQKFNITHRVSHIKDFIEKYQGSQRSPPFSLATALPVLRLLDETLTLEEADLQNAVIIQRLQKTASFRELSEH.

Residues 1–151 (MKDVDNLKSI…SATPKIVSKA (151 aa)) form a required for interaction with CHRNA3 region. The tract at residues 1–164 (MKDVDNLKSI…EVENKNNLSA (164 aa)) is required for inhibition of CHRNA3 ubiquitination and translocation of CHRNA3 to the plasma membrane resulting in an increase in acetylcholine-gated nicotinic acetylcholine receptor currents. The SEP domain maps to 60–124 (QVDVNIKLWK…VEDKKNEICL (65 aa)). The interval 167–259 (LNNLEPITNI…TASFRELSEH (93 aa)) is required for interaction with VCP. The region spanning 169-246 (NLEPITNIQI…DLQNAVIIQR (78 aa)) is the UBX domain.

Part of a complex composed of STUB1/CHIP, VCP/p97, CHRNA3, and UBXN2A that modulates the ubiquitination and endoplasmic reticulum-associated degradation (ERAD) of CHRNA3. Within the complex UBXN2A acts as a scaffold protein required for the interaction of CHRNA3 with VCP/p97, this interaction also inhibits CHRNA3 ubiquitination by STUB1/CHIP and subsequently ERAD. Interacts (via SEP domain) with CHRNA3 and interacts (via UBX domain) with VCP/P97; these interactions are required for the interaction of CHRNA3 with the STUB1-VCP-UBXN2A complex. Interacts with HSPA9/MOT-2 (via SBD domain); the interaction inhibits HSPA9/MOT-2 interaction with and degradation of p53, thereby promotes p53 translocation to the nucleus. Interacts with RICTOR. Post-translationally, ubiquitinated. As to expression, expressed in the colon (at protein level).

The protein resides in the golgi apparatus. Its subcellular location is the endoplasmic reticulum. The protein localises to the perikaryon. It is found in the cell projection. It localises to the dendrite. The protein resides in the nucleus. Its subcellular location is the cytoplasm. Acts to repress the ubiquitination and subsequent endoplasmic reticulum-associated degradation of CHRNA3 by the STUB1-VCP-UBXN2A complex in cortical neurons. Also acts to promote the translocation of CHRNA3 to the plasma membrane and subsequently increases plasma membrane acetylcholine-gated ion-channel activation. Plays a role in the inhibition of STUB1-mediated TP53 degradation, via its interaction with HSPA9 which acts to inhibit TP53 binding to HSPA9. Positively mediates the ubiquitination and proteosomal degradation of RICTOR, may thereby act as a negative regulator of the mTORC2 pathway. This is UBX domain-containing protein 2A from Homo sapiens (Human).